The following is a 338-amino-acid chain: DNA-directed RNA polymerase subunit alpha (338 aa).

The interval 1–234 (MIQKNWQELI…DQLNVFVNFE (234 aa)) is alpha N-terminal domain (alpha-NTD). The alpha C-terminal domain (alpha-CTD) stretch occupies residues 250-338 (FNPALLKKVD…ELAKRFEEHY (89 aa)).

Belongs to the RNA polymerase alpha chain family. As to quaternary structure, homodimer. The RNAP catalytic core consists of 2 alpha, 1 beta, 1 beta' and 1 omega subunit. When a sigma factor is associated with the core the holoenzyme is formed, which can initiate transcription.

The catalysed reaction is RNA(n) + a ribonucleoside 5'-triphosphate = RNA(n+1) + diphosphate. DNA-dependent RNA polymerase catalyzes the transcription of DNA into RNA using the four ribonucleoside triphosphates as substrates. This chain is DNA-directed RNA polymerase subunit alpha, found in Beijerinckia indica subsp. indica (strain ATCC 9039 / DSM 1715 / NCIMB 8712).